A 47-amino-acid polypeptide reads, in one-letter code: uncharacterized protein (47 aa).

A signal peptide spans 1-18 (MKKWLLIIAGALIISACA). Residues 28–47 (EGSHSGVKFDKDSRQWGLNQ) form a disordered region.

This is an uncharacterized protein from Haemophilus influenzae (strain ATCC 51907 / DSM 11121 / KW20 / Rd).